The chain runs to 395 residues: Multidrug resistance protein MdtL (395 aa).

12 helical membrane passes run 4-24, 42-62, 69-89, 93-113, 131-151, 158-178, 217-237, 247-267, 271-291, 295-315, 328-350, and 355-377; these read FLLCSFALVLLYPAGIDMYLV, IAFSVYLAGMATAMLFAGKIA, PVAIVGALVFMTASLLCSRAS, LFLSGRFLQGVGAGGCYVVAF, LLNGITCIVPVLAPVMGHLIM, SLFYTMSAMGIIVGLLSLFIL, VSVILTFVNASPVLLMEVMGF, ALTAGVSMVVSFSTPFALGLF, TLMLVSQGLFLTAGVTLSLAH, VTLFGLTLICAGFSVGFGVAM, VASSTLGIAQVCGSSLWIWLAAI, and AMNMLIGILIGCSIVSILLIFSV.

The protein belongs to the major facilitator superfamily. DHA1 family. MdtL (TC 2.A.1.2.22) subfamily.

It localises to the cell inner membrane. The sequence is that of Multidrug resistance protein MdtL from Salmonella schwarzengrund (strain CVM19633).